Here is a 129-residue protein sequence, read N- to C-terminus: MIKQKKKIIKITKKKFPKGIVHIKTTYNNVLVSVSDPKGNVIAWSSSGACGFKSSKKATPLATKTTTAIAVKKAIEQGLQKVEINISGPGTGRETALKCVQSLGLRISCIRDVTPLPHNGCRPSKRRRI.

It belongs to the universal ribosomal protein uS11 family. As to quaternary structure, part of the 30S ribosomal subunit.

It localises to the plastid. It is found in the chloroplast. The chain is Small ribosomal subunit protein uS11c from Euglena gracilis.